The sequence spans 391 residues: NADH-quinone oxidoreductase subunit D (391 aa).

The protein belongs to the complex I 49 kDa subunit family. In terms of assembly, NDH-1 is composed of 14 different subunits. Subunits NuoB, C, D, E, F, and G constitute the peripheral sector of the complex.

The protein resides in the cell inner membrane. It catalyses the reaction a quinone + NADH + 5 H(+)(in) = a quinol + NAD(+) + 4 H(+)(out). In terms of biological role, NDH-1 shuttles electrons from NADH, via FMN and iron-sulfur (Fe-S) centers, to quinones in the respiratory chain. The immediate electron acceptor for the enzyme in this species is believed to be ubiquinone. Couples the redox reaction to proton translocation (for every two electrons transferred, four hydrogen ions are translocated across the cytoplasmic membrane), and thus conserves the redox energy in a proton gradient. The polypeptide is NADH-quinone oxidoreductase subunit D (Rickettsia akari (strain Hartford)).